The following is a 685-amino-acid chain: Probable cysteine desulfurase (685 aa).

Residues 1 to 282 form a cargo-loading domain region; the sequence is MTRSPCSTTS…RDEHEVFDVA (282 aa). Disordered stretches follow at residues 48–135 and 162–185; these read SIRP…TSAG and PTPA…VPDT. A compositionally biased stretch (low complexity) spans 71-85; it reads ATAATSAGRTAAGTA. The segment covering 102–121 has biased composition (pro residues); sequence LPPPASPAPEAPPQAAPPAP. The segment covering 122–135 has biased composition (low complexity); the sequence is RGSAPDATAATSAG. Residues 164 to 178 are compositionally biased toward pro residues; sequence PAGPEAPPQSAPPAP. Lys-502 bears the N6-(pyridoxal phosphate)lysine mark. Cys-640 (cysteine persulfide intermediate) is an active-site residue.

The protein belongs to the class-V pyridoxal-phosphate-dependent aminotransferase family. Csd subfamily. Isolated from bacteria in a complex with encapsulin 2A (AC I3NID5), strongly suggesting it is found in a type 2A encapsulin nanocompartment. There are 1-2 copies of this protein in each encapsulin shell. Requires pyridoxal 5'-phosphate as cofactor.

The protein resides in the encapsulin nanocompartment. It localises to the cell membrane. It carries out the reaction (sulfur carrier)-H + L-cysteine = (sulfur carrier)-SH + L-alanine. Functionally, cargo protein of a type 2A encapsulin nanocompartment involved in sulfur metabolism. Cysteine desulfurases mobilize the sulfur from L-cysteine to yield L-alanine, an essential step in sulfur metabolism for biosynthesis of a variety of sulfur-containing biomolecules. The chain is Probable cysteine desulfurase from Mycolicibacterium paratuberculosis (strain ATCC BAA-968 / K-10) (Mycobacterium paratuberculosis).